We begin with the raw amino-acid sequence, 457 residues long: Reticulon-like protein B18 (457 aa).

Residues 94–183 (AAVTARRSKT…SPSSDQPQDV (90 aa)) are disordered. Residues 124–136 (LRSEAMVDTKENT) are compositionally biased toward basic and acidic residues. The segment covering 149–163 (NQRKQKKLGRSKKEK) has biased composition (basic residues). Low complexity predominate over residues 166–183 (SVPLLASPSPSSDQPQDV). The Reticulon domain occupies 195 to 385 (ISDLIMWRDV…AFWNLTSLKT (191 aa)). Helical transmembrane passes span 208 to 228 (TLWF…AKGF), 230 to 250 (FSVF…SFLS), 314 to 334 (YGYL…SFTI), and 377 to 397 (FWNL…VVVI). Residues 407–457 (DSEDEEEKKQQEKTHPEQQKSPEDKSTSPRSAEEEQALVLVAETKAPKKLY) form a disordered region. Basic and acidic residues predominate over residues 413–439 (EKKQQEKTHPEQQKSPEDKSTSPRSAE).

It localises to the endoplasmic reticulum membrane. In Arabidopsis thaliana (Mouse-ear cress), this protein is Reticulon-like protein B18 (RTNLB18).